The primary structure comprises 437 residues: 3-ketoacyl-CoA thiolase (437 aa).

Residue C99 is the Acyl-thioester intermediate of the active site. Catalysis depends on proton acceptor residues H392 and C422.

The protein belongs to the thiolase-like superfamily. Thiolase family. In terms of assembly, heterotetramer of two alpha chains (FadJ) and two beta chains (FadI).

It localises to the cytoplasm. The catalysed reaction is an acyl-CoA + acetyl-CoA = a 3-oxoacyl-CoA + CoA. It participates in lipid metabolism; fatty acid beta-oxidation. In terms of biological role, catalyzes the final step of fatty acid oxidation in which acetyl-CoA is released and the CoA ester of a fatty acid two carbons shorter is formed. This Erwinia tasmaniensis (strain DSM 17950 / CFBP 7177 / CIP 109463 / NCPPB 4357 / Et1/99) protein is 3-ketoacyl-CoA thiolase.